A 396-amino-acid chain; its full sequence is SVPVGETTLGRIFNVLGEPVDNLGPVQNSTTFPIHRSAPAFTQLDTKLSIFETGIKVVDLLAPYRRGGKIGLFGGAGVGKTVLIMELINNIAKAHGGVSVSGGVGERTREGNDLYMETKESKVINEQNIAESKVALVYGQMNEPPGARMRVGLTASTMAEYFRDINKRDVLLFIDNIFRFVQAGSEVSALLGRMPSAVGYQPTLGTEMGSLQERITSTKEGSITSIQAVYVPADDLTDPAPATTFAHLDATTVLSRGLAAKGIYPAVDPLDSTSTMLQPWIVGEEHYETAQGVKQTLQRYKELQDIIAIPGLDELSEEDRLTVARARKIERFLSQPFFVAEVFTGSPGKYVSLPETIKGFQMILPGELDNLPEQASYLVGNIDEAAAKAAALQAGG.

Residue G74–T81 participates in ATP binding.

Belongs to the ATPase alpha/beta chains family. F-type ATPases have 2 components, CF(1) - the catalytic core - and CF(0) - the membrane proton channel. CF(1) has five subunits: alpha(3), beta(3), gamma(1), delta(1), epsilon(1). CF(0) has four main subunits: a(1), b(1), b'(1) and c(9-12).

Its subcellular location is the plastid. The protein resides in the chloroplast thylakoid membrane. The catalysed reaction is ATP + H2O + 4 H(+)(in) = ADP + phosphate + 5 H(+)(out). Produces ATP from ADP in the presence of a proton gradient across the membrane. The catalytic sites are hosted primarily by the beta subunits. This is ATP synthase subunit beta, chloroplastic from Adiantum raddianum (Maidenhair fern).